A 406-amino-acid chain; its full sequence is Solanesyl diphosphate synthase 1, chloroplastic (406 aa).

Residues 1–71 (MMTSCRNIDL…NGIGQSQTVS (71 aa)) constitute a chloroplast transit peptide. Isopentenyl diphosphate is bound by residues lysine 126, arginine 129, and histidine 164. 2 residues coordinate Mg(2+): aspartate 171 and aspartate 175. An an all-trans-polyprenyl diphosphate-binding site is contributed by arginine 180. Arginine 181 lines the isopentenyl diphosphate pocket. An all-trans-polyprenyl diphosphate is bound by residues lysine 257, threonine 258, glutamine 295, and lysine 312.

It belongs to the FPP/GGPP synthase family. In terms of assembly, homodimer. Interacts with FBN5. Mg(2+) is required as a cofactor. Higher expression in leaves than in roots.

The protein localises to the plastid. It localises to the chloroplast. The catalysed reaction is 5 isopentenyl diphosphate + (2E,6E,10E)-geranylgeranyl diphosphate = all-trans-nonaprenyl diphosphate + 5 diphosphate. It carries out the reaction isopentenyl diphosphate + (2E,6E)-farnesyl diphosphate = (2E,6E,10E)-geranylgeranyl diphosphate + diphosphate. Involved in providing solanesyl diphosphate for plastoquinone-9 (PQ-9) formation in plastids. Catalyzes the elongation of the prenyl side chain of PQ-9 in plastids. Contributes to the biosynthesis of plastochromanol-8 (PC-8) in plastids. Does not contribute to the synthesis of tocopherol or ubiquinone. PQ-9 and PC-8 are lipophilic antioxidants that act as protectant against photooxidative stress under high light stress conditions. Prefers geranylgeranyl diphosphate to farnesyl diphosphate as substrate. No activity with geranyl diphosphate or dimethylallyl diphosphate as substrate. This chain is Solanesyl diphosphate synthase 1, chloroplastic, found in Arabidopsis thaliana (Mouse-ear cress).